A 382-amino-acid chain; its full sequence is Dual-specificity RNA methyltransferase RlmN (382 aa).

The active-site Proton acceptor is Glu95. Residues 101-348 (EDDRGTLCIS…TTVRKTRGDD (248 aa)) enclose the Radical SAM core domain. Residues Cys108 and Cys353 are joined by a disulfide bond. Cys115, Cys119, and Cys122 together coordinate [4Fe-4S] cluster. Residues 179 to 180 (GE), Ser211, 233 to 235 (SLH), and Asn310 each bind S-adenosyl-L-methionine. Catalysis depends on Cys353, which acts as the S-methylcysteine intermediate.

It belongs to the radical SAM superfamily. RlmN family. [4Fe-4S] cluster is required as a cofactor.

It localises to the cytoplasm. It catalyses the reaction adenosine(2503) in 23S rRNA + 2 reduced [2Fe-2S]-[ferredoxin] + 2 S-adenosyl-L-methionine = 2-methyladenosine(2503) in 23S rRNA + 5'-deoxyadenosine + L-methionine + 2 oxidized [2Fe-2S]-[ferredoxin] + S-adenosyl-L-homocysteine. The enzyme catalyses adenosine(37) in tRNA + 2 reduced [2Fe-2S]-[ferredoxin] + 2 S-adenosyl-L-methionine = 2-methyladenosine(37) in tRNA + 5'-deoxyadenosine + L-methionine + 2 oxidized [2Fe-2S]-[ferredoxin] + S-adenosyl-L-homocysteine. Its function is as follows. Specifically methylates position 2 of adenine 2503 in 23S rRNA and position 2 of adenine 37 in tRNAs. m2A2503 modification seems to play a crucial role in the proofreading step occurring at the peptidyl transferase center and thus would serve to optimize ribosomal fidelity. The sequence is that of Dual-specificity RNA methyltransferase RlmN from Bordetella pertussis (strain Tohama I / ATCC BAA-589 / NCTC 13251).